We begin with the raw amino-acid sequence, 150 residues long: MDNKELQKLTEDISETYFKKPFRHQALFNDRLKTTGGRYLLTSHNIELNRKYLIEHGREELIGIIKHELCHYHLHLEGKGYKHRDRDFRMLLQQVNAPRFCTPLKKKAENKKTYMYICTTCGQQYIKKRAMNPDRYRCGKCRGKIKRIFS.

A SprT-like domain is found at 6-147 (LQKLTEDISE…CGKCRGKIKR (142 aa)). His-67 contacts Zn(2+). Glu-68 is a catalytic residue. A Zn(2+)-binding site is contributed by His-71.

The protein belongs to the SprT family. The cofactor is Zn(2+).

The protein resides in the cytoplasm. The sequence is that of Protein SprT-like (ydcK) from Bacillus subtilis (strain 168).